A 308-amino-acid chain; its full sequence is GMP synthase [glutamine-hydrolyzing] subunit B (308 aa).

Positions 2 to 183 (LNPSDFIEEA…LGLPREMIQR (182 aa)) constitute a GMPS ATP-PPase domain. An ATP-binding site is contributed by 29–35 (SGGVDSS).

Heterodimer composed of a glutamine amidotransferase subunit (A) and a GMP-binding subunit (B).

It carries out the reaction XMP + L-glutamine + ATP + H2O = GMP + L-glutamate + AMP + diphosphate + 2 H(+). It participates in purine metabolism; GMP biosynthesis; GMP from XMP (L-Gln route): step 1/1. In terms of biological role, catalyzes the synthesis of GMP from XMP. The polypeptide is GMP synthase [glutamine-hydrolyzing] subunit B (guaAB) (Methanothermobacter thermautotrophicus (strain ATCC 29096 / DSM 1053 / JCM 10044 / NBRC 100330 / Delta H) (Methanobacterium thermoautotrophicum)).